The primary structure comprises 134 residues: Cell division protein SepF 1 (134 aa).

The protein belongs to the SepF family. Homodimer. Interacts with FtsZ.

The protein resides in the cytoplasm. Cell division protein that is part of the divisome complex and is recruited early to the Z-ring. Probably stimulates Z-ring formation, perhaps through the cross-linking of FtsZ protofilaments. Its function overlaps with FtsA. The sequence is that of Cell division protein SepF 1 from Streptomyces avermitilis (strain ATCC 31267 / DSM 46492 / JCM 5070 / NBRC 14893 / NCIMB 12804 / NRRL 8165 / MA-4680).